Reading from the N-terminus, the 576-residue chain is Proline--tRNA ligase (576 aa).

Belongs to the class-II aminoacyl-tRNA synthetase family. ProS type 1 subfamily. As to quaternary structure, homodimer.

It localises to the cytoplasm. The enzyme catalyses tRNA(Pro) + L-proline + ATP = L-prolyl-tRNA(Pro) + AMP + diphosphate. Catalyzes the attachment of proline to tRNA(Pro) in a two-step reaction: proline is first activated by ATP to form Pro-AMP and then transferred to the acceptor end of tRNA(Pro). As ProRS can inadvertently accommodate and process non-cognate amino acids such as alanine and cysteine, to avoid such errors it has two additional distinct editing activities against alanine. One activity is designated as 'pretransfer' editing and involves the tRNA(Pro)-independent hydrolysis of activated Ala-AMP. The other activity is designated 'posttransfer' editing and involves deacylation of mischarged Ala-tRNA(Pro). The misacylated Cys-tRNA(Pro) is not edited by ProRS. The chain is Proline--tRNA ligase from Pelobacter propionicus (strain DSM 2379 / NBRC 103807 / OttBd1).